The primary structure comprises 410 residues: Cysteine desulfurase IscS (410 aa).

Residues 80–81 (AT), Asn160, Gln188, and 208–210 (SGH) each bind pyridoxal 5'-phosphate. Lys211 carries the post-translational modification N6-(pyridoxal phosphate)lysine. Pyridoxal 5'-phosphate is bound at residue Thr248. Residue Cys334 is the Cysteine persulfide intermediate of the active site. [2Fe-2S] cluster is bound at residue Cys334.

It belongs to the class-V pyridoxal-phosphate-dependent aminotransferase family. NifS/IscS subfamily. In terms of assembly, homodimer. Forms a heterotetramer with IscU, interacts with other sulfur acceptors. The cofactor is pyridoxal 5'-phosphate.

It is found in the cytoplasm. It catalyses the reaction (sulfur carrier)-H + L-cysteine = (sulfur carrier)-SH + L-alanine. Its pathway is cofactor biosynthesis; iron-sulfur cluster biosynthesis. Its function is as follows. Master enzyme that delivers sulfur to a number of partners involved in Fe-S cluster assembly, tRNA modification or cofactor biosynthesis. Catalyzes the removal of elemental sulfur atoms from cysteine to produce alanine. Functions as a sulfur delivery protein for Fe-S cluster synthesis onto IscU, an Fe-S scaffold assembly protein, as well as other S acceptor proteins. The protein is Cysteine desulfurase IscS of Rickettsia prowazekii (strain Madrid E).